Reading from the N-terminus, the 370-residue chain is Flagellar P-ring protein (370 aa).

The signal sequence occupies residues 1–24; sequence MTLSKWILSFGLSVCLIVSHPVSA.

It belongs to the FlgI family. The basal body constitutes a major portion of the flagellar organelle and consists of four rings (L,P,S, and M) mounted on a central rod.

It is found in the periplasm. Its subcellular location is the bacterial flagellum basal body. Assembles around the rod to form the L-ring and probably protects the motor/basal body from shearing forces during rotation. This Nitrosomonas europaea (strain ATCC 19718 / CIP 103999 / KCTC 2705 / NBRC 14298) protein is Flagellar P-ring protein.